The primary structure comprises 342 residues: S-adenosylmethionine:tRNA ribosyltransferase-isomerase (342 aa).

Belongs to the QueA family. As to quaternary structure, monomer.

The protein localises to the cytoplasm. The catalysed reaction is 7-aminomethyl-7-carbaguanosine(34) in tRNA + S-adenosyl-L-methionine = epoxyqueuosine(34) in tRNA + adenine + L-methionine + 2 H(+). It participates in tRNA modification; tRNA-queuosine biosynthesis. In terms of biological role, transfers and isomerizes the ribose moiety from AdoMet to the 7-aminomethyl group of 7-deazaguanine (preQ1-tRNA) to give epoxyqueuosine (oQ-tRNA). The polypeptide is S-adenosylmethionine:tRNA ribosyltransferase-isomerase (Shouchella clausii (strain KSM-K16) (Alkalihalobacillus clausii)).